Here is a 238-residue protein sequence, read N- to C-terminus: Thymidine kinase a (238 aa).

ATP-binding positions include 38–45 (GPMFSGKS), 70–72 (DTR), and 115–118 (DEAQ). The active-site Proton acceptor is the Glu-116. Tyr-147 contributes to the substrate binding site. Zn(2+) contacts are provided by Cys-172 and Cys-175. Residues 191–195 (TELIG) and Tyr-200 contribute to the substrate site. Cys-204 is a Zn(2+) binding site.

This sequence belongs to the thymidine kinase family. In terms of assembly, monomer and dimer. Dimerization is stimulated by ATP. As to expression, expressed ubiquitously.

The protein localises to the cytoplasm. The catalysed reaction is thymidine + ATP = dTMP + ADP + H(+). It functions in the pathway purine metabolism. The protein operates within pyrimidine metabolism. Part of the salvage pathway for purine and pyrimidine deoxyribonucleotide synthesis. Phosphorylates preferentially purines over pyrimidines. Mediates tolerance to genotoxins, such as ultraviolet-C (UV-C) irradiation, MMC, a DNA crosslinker, and ZEO, a DNA intercalator, that induce double-strand breaks and thus contributes to several DNA repair pathways by providing deoxythymidine triphosphate that serve as precursors for DNA repair and to balance deoxyribonucleotides pools. This chain is Thymidine kinase a, found in Arabidopsis thaliana (Mouse-ear cress).